Consider the following 492-residue polypeptide: MLDTGLLLVVILASLSVMFLVSLWQQKIRERLPPGPTPLPFIGNYLQLNMKDVYSSITQLSERYGPVFTIHLGPRRIVVLYGYDAVKEALVDQAEEFSGRGELPTFNILFKGYGFSLSNVEQAKRIRRFTIATLRDFGVGKRDVQECILEEAGYLIKTLQGTCGAPIDPSIYLSKTVSNVINSIVFGNRFDYEDKEFLSLLEMIDEMNIFAASATGQLYDMFHSVMKYLPGPQQQIIKVTQKLEDFMIEKVRQNHSTLDPNSPRNFIDSFLIRMQEEKYVNSEFHMNNLVMSSLGLLFAGTGSVSSTLYHGFLLLMKHPDVEAKVHEEIERVIGRNRQPQYEDHMKMPYTQAVINEIQRFSNLAPLGIPRRIIKNTTFRGFFLPKGTDVFPIIGSLMTEPKFFPNHKDFNPQHFLDDKGQLKKNAAFLPFSIGKRFCLGDSLAKMELFLLLTTILQNFRFKFPMNLEDINEYPSPIGFTRIIPNYTMSFMPI.

C437 is a heme binding site.

This sequence belongs to the cytochrome P450 family. The cofactor is heme. Liver specific.

The protein localises to the endoplasmic reticulum membrane. Its subcellular location is the microsome membrane. It catalyses the reaction an organic molecule + reduced [NADPH--hemoprotein reductase] + O2 = an alcohol + oxidized [NADPH--hemoprotein reductase] + H2O + H(+). Functionally, highly active in the 15-alpha-hydroxylation of testosterone. In Rattus norvegicus (Rat), this protein is Cytochrome P450 2A2 (Cyp2a2).